The primary structure comprises 101 residues: Small ribosomal subunit protein uS14 (101 aa).

Belongs to the universal ribosomal protein uS14 family. In terms of assembly, part of the 30S ribosomal subunit. Contacts proteins S3 and S10.

Functionally, binds 16S rRNA, required for the assembly of 30S particles and may also be responsible for determining the conformation of the 16S rRNA at the A site. The protein is Small ribosomal subunit protein uS14 of Burkholderia mallei (strain NCTC 10247).